The sequence spans 165 residues: UPF0254 protein MmarC6_1720 (165 aa).

This sequence belongs to the UPF0254 family.

The protein is UPF0254 protein MmarC6_1720 of Methanococcus maripaludis (strain C6 / ATCC BAA-1332).